The following is a 389-amino-acid chain: Acetylornithine aminotransferase (389 aa).

Residues 104 to 105 (GT) and Phe131 each bind pyridoxal 5'-phosphate. Residue Arg134 participates in N(2)-acetyl-L-ornithine binding. 216-219 (DEVQ) lines the pyridoxal 5'-phosphate pocket. Lys245 is modified (N6-(pyridoxal phosphate)lysine). A N(2)-acetyl-L-ornithine-binding site is contributed by Ser273. Thr274 lines the pyridoxal 5'-phosphate pocket.

The protein belongs to the class-III pyridoxal-phosphate-dependent aminotransferase family. ArgD subfamily. Homodimer. Pyridoxal 5'-phosphate serves as cofactor.

It is found in the cytoplasm. It carries out the reaction N(2)-acetyl-L-ornithine + 2-oxoglutarate = N-acetyl-L-glutamate 5-semialdehyde + L-glutamate. The protein operates within amino-acid biosynthesis; L-arginine biosynthesis; N(2)-acetyl-L-ornithine from L-glutamate: step 4/4. This is Acetylornithine aminotransferase from Methanopyrus kandleri (strain AV19 / DSM 6324 / JCM 9639 / NBRC 100938).